Here is a 432-residue protein sequence, read N- to C-terminus: Glutamate-1-semialdehyde 2,1-aminomutase (432 aa).

K270 bears the N6-(pyridoxal phosphate)lysine mark.

The protein belongs to the class-III pyridoxal-phosphate-dependent aminotransferase family. HemL subfamily. In terms of assembly, homodimer. Requires pyridoxal 5'-phosphate as cofactor.

The protein localises to the cytoplasm. It catalyses the reaction (S)-4-amino-5-oxopentanoate = 5-aminolevulinate. It functions in the pathway porphyrin-containing compound metabolism; protoporphyrin-IX biosynthesis; 5-aminolevulinate from L-glutamyl-tRNA(Glu): step 2/2. The sequence is that of Glutamate-1-semialdehyde 2,1-aminomutase from Acinetobacter baylyi (strain ATCC 33305 / BD413 / ADP1).